The primary structure comprises 178 residues: Large ribosomal subunit protein uL6 (178 aa).

This sequence belongs to the universal ribosomal protein uL6 family. As to quaternary structure, part of the 50S ribosomal subunit.

In terms of biological role, this protein binds to the 23S rRNA, and is important in its secondary structure. It is located near the subunit interface in the base of the L7/L12 stalk, and near the tRNA binding site of the peptidyltransferase center. The protein is Large ribosomal subunit protein uL6 of Corynebacterium diphtheriae (strain ATCC 700971 / NCTC 13129 / Biotype gravis).